A 1785-amino-acid polypeptide reads, in one-letter code: Mellein synthase (1785 aa).

Residues 1–36 (MATPDDPATPALSLSASNSSSPTAASSVPPPTGTSE) form a disordered region. A compositionally biased stretch (low complexity) spans 8-27 (ATPALSLSASNSSSPTAASS). Residues 39–464 (YDDVAIIGMS…GTVSHAIIEQ (426 aa)) form the Ketosynthase family 3 (KS3) domain. Catalysis depends on for beta-ketoacyl synthase activity residues C211, H346, and H386. A malonyl-CoA:ACP transacylase (MAT) domain region spans residues 575-888 (VWVFSGHGSH…AVAQLWTKGV (314 aa)). Catalysis depends on S661, which acts as the For malonyltransferase activity. The segment at 933–1047 (NNMLGQRMVV…ASWENEPSAN (115 aa)) is N-terminal hotdog fold. Positions 933–1206 (NNMLGQRMVV…FTEVEATPTK (274 aa)) constitute a PKS/mFAS DH domain. The segment at 935–1203 (MLGQRMVVAG…SIRFTEVEAT (269 aa)) is dehydratase (DH) domain. The Proton acceptor; for dehydratase activity role is filled by H965. The tract at residues 1062–1206 (GTRVSETFSV…FTEVEATPTK (145 aa)) is C-terminal hotdog fold. Catalysis depends on D1123, which acts as the Proton donor; for dehydratase activity. Residues 1418-1608 (GTYVLTGGLG…AIAFQWTAWR (191 aa)) are ketoreductase (KR) domain. Residues 1681–1698 (QDQSAPASGNASDSSGRP) show a composition bias toward polar residues. The disordered stretch occupies residues 1681 to 1701 (QDQSAPASGNASDSSGRPTAS). A Carrier domain is found at 1706–1781 (PWLDVKIREC…AMVGWFQKQF (76 aa)). Position 1741 is an O-(pantetheine 4'-phosphoryl)serine (S1741).

Its pathway is secondary metabolite biosynthesis. Its function is as follows. Polyketide synthase that produces (R)-mellein, a secondary metabolite that inhibits the germination of wheat (Triticum aestivum) and barrel medic (Medicago truncatula) seeds. Condensates 1 acetate starter unit and 4 extender malonate units. The nascent pentaketide intermediate then undergoes an aldol cyclization and is aromatized via dehydration. The (R)-O-methylmellein isolated from P.nodorum is most likely to be derived from (R)-mellein via an additional methylation at the hydroxyl group. Interestingly, no O-methyltransferase gene is encoded in the vicinity of MLNS on the chromosome. Thus, the O-methylation is likely to be catalyzed by an endogenous O-methyltransferase encoded elsewhere in the genome of P.nodorum. In Phaeosphaeria nodorum (strain SN15 / ATCC MYA-4574 / FGSC 10173) (Glume blotch fungus), this protein is Mellein synthase.